The primary structure comprises 315 residues: Probable cell division protein WhiA (315 aa).

Residues 280–313 (SLKELGQMLDPQVGKSGINHRLRKIEKIAEELRT) constitute a DNA-binding region (H-T-H motif).

The protein belongs to the WhiA family.

Its function is as follows. Involved in cell division and chromosome segregation. This chain is Probable cell division protein WhiA, found in Clostridium botulinum (strain Alaska E43 / Type E3).